The sequence spans 133 residues: Small ribosomal subunit protein uS8 (133 aa).

The protein belongs to the universal ribosomal protein uS8 family. Part of the 30S ribosomal subunit. Contacts proteins S5 and S12.

Its function is as follows. One of the primary rRNA binding proteins, it binds directly to 16S rRNA central domain where it helps coordinate assembly of the platform of the 30S subunit. The polypeptide is Small ribosomal subunit protein uS8 (Endomicrobium trichonymphae).